Reading from the N-terminus, the 393-residue chain is NADH-quinone oxidoreductase subunit D (393 aa).

It belongs to the complex I 49 kDa subunit family. As to quaternary structure, NDH-1 is composed of 14 different subunits. Subunits NuoB, C, D, E, F, and G constitute the peripheral sector of the complex.

It localises to the cell inner membrane. The catalysed reaction is a quinone + NADH + 5 H(+)(in) = a quinol + NAD(+) + 4 H(+)(out). In terms of biological role, NDH-1 shuttles electrons from NADH, via FMN and iron-sulfur (Fe-S) centers, to quinones in the respiratory chain. The immediate electron acceptor for the enzyme in this species is believed to be ubiquinone. Couples the redox reaction to proton translocation (for every two electrons transferred, four hydrogen ions are translocated across the cytoplasmic membrane), and thus conserves the redox energy in a proton gradient. This is NADH-quinone oxidoreductase subunit D from Ehrlichia ruminantium (strain Welgevonden).